Reading from the N-terminus, the 128-residue chain is Ribosome-binding factor A (128 aa).

This sequence belongs to the RbfA family. In terms of assembly, monomer. Binds 30S ribosomal subunits, but not 50S ribosomal subunits or 70S ribosomes.

Its subcellular location is the cytoplasm. In terms of biological role, one of several proteins that assist in the late maturation steps of the functional core of the 30S ribosomal subunit. Associates with free 30S ribosomal subunits (but not with 30S subunits that are part of 70S ribosomes or polysomes). Required for efficient processing of 16S rRNA. May interact with the 5'-terminal helix region of 16S rRNA. The polypeptide is Ribosome-binding factor A (Rippkaea orientalis (strain PCC 8801 / RF-1) (Cyanothece sp. (strain PCC 8801))).